The sequence spans 545 residues: Tripartite motif-containing protein 26 (545 aa).

An RING-type zinc finger spans residues 16–57; the sequence is CSICLDYLRDPVTIDCGHVFCRSCTSDIRPISGNRPVCPLCK. The B box-type zinc finger occupies 97–138; sequence QDMKLCERHQEKLHYYCEDDGKLLCVMCRESREHRPHTAVLV. The Zn(2+) site is built by cysteine 102, histidine 105, cysteine 124, and histidine 130. Positions 197-243 form a coiled coil; that stretch reads QFLKKREQHLLDQLATLEQLLTEGREKFKTRGVSELDRLTLVISELE. The region spanning 301–545 is the B30.2/SPRY domain; it reads RGLRQFQGKL…WPGARLLLRP (245 aa). A disordered region spans residues 382–443; sequence REGWSEDEEE…EEEEEVQESC (62 aa). A compositionally biased stretch (acidic residues) spans 386–440; that stretch reads SEDEEEGEEEEEGEEEEEDEEVGYGDGYEDWETDEEDESLGEEEEEEEEEEEEVQ.

Belongs to the TRIM/RBCC family. As to quaternary structure, interacts with TBK1; this interaction bridges together TBK1 and NEMO in order to activate TBK1. Interacts with INCA1. In terms of processing, autoubiquitinates upon viral infection. In turn, autoubiquitinated TRIM26 recruits NEMO and bridges TBK1-NEMO interaction.

Its subcellular location is the cytoplasm. The protein resides in the nucleus. The enzyme catalyses S-ubiquitinyl-[E2 ubiquitin-conjugating enzyme]-L-cysteine + [acceptor protein]-L-lysine = [E2 ubiquitin-conjugating enzyme]-L-cysteine + N(6)-ubiquitinyl-[acceptor protein]-L-lysine.. Functionally, E3 ubiquitin-protein ligase which regulates the IFN-beta production and antiviral response downstream of various DNA-encoded pattern-recognition receptors (PRRs). Also plays a central role in determining the response to different forms of oxidative stress by controlling levels of DNA glycosylases NEIL1, NEIL3 and NTH1 that are involved in repair of damaged DNA. Promotes nuclear IRF3 ubiquitination and proteasomal degradation. Bridges together TBK1 and NEMO during the innate response to viral infection leading to the activation of TBK1. Positively regulates LPS-mediated inflammatory innate immune response by catalyzing the 'Lys-11'-linked polyubiquitination of TAB1 to enhance its activation and subsequent NF-kappa-B and MAPK signaling. In a manner independent of its catalytic activity, inhibits WWP2, a SOX2-directed E3 ubiquitin ligase, and thus protects SOX2 from polyubiquitination and proteasomal degradation. Ubiquitinates the histone acetyltransferase protein complex component PHF20 and thereby triggers its degradation in the nucleus after its recruitment by the histone demethylase KDM6B, serving as a scaffold protein. Upon induction by TGF-beta, ubiquitinates the TFIID component TAF7 for proteasomal degradation. Induces ferroptosis by ubiquitinating SLC7A11, a critical protein for lipid reactive oxygen species (ROS) scavenging. The chain is Tripartite motif-containing protein 26 (Trim26) from Mus musculus (Mouse).